The chain runs to 583 residues: Proline--tRNA ligase (583 aa).

The protein belongs to the class-II aminoacyl-tRNA synthetase family. ProS type 1 subfamily. As to quaternary structure, homodimer.

Its subcellular location is the cytoplasm. The catalysed reaction is tRNA(Pro) + L-proline + ATP = L-prolyl-tRNA(Pro) + AMP + diphosphate. In terms of biological role, catalyzes the attachment of proline to tRNA(Pro) in a two-step reaction: proline is first activated by ATP to form Pro-AMP and then transferred to the acceptor end of tRNA(Pro). As ProRS can inadvertently accommodate and process non-cognate amino acids such as alanine and cysteine, to avoid such errors it has two additional distinct editing activities against alanine. One activity is designated as 'pretransfer' editing and involves the tRNA(Pro)-independent hydrolysis of activated Ala-AMP. The other activity is designated 'posttransfer' editing and involves deacylation of mischarged Ala-tRNA(Pro). The misacylated Cys-tRNA(Pro) is not edited by ProRS. The polypeptide is Proline--tRNA ligase (Methylococcus capsulatus (strain ATCC 33009 / NCIMB 11132 / Bath)).